A 460-amino-acid polypeptide reads, in one-letter code: Hydroxymethylglutaryl-CoA synthase MYCGRDRAFT_54740 (460 aa).

Ala35 is a (3S)-3-hydroxy-3-methylglutaryl-CoA binding site. The Proton donor/acceptor role is filled by Glu86. (3S)-3-hydroxy-3-methylglutaryl-CoA contacts are provided by Cys120, Asn158, Thr162, Ser212, His262, Lys271, Asn339, and Ser373. Cys120 (acyl-thioester intermediate) is an active-site residue. His262 (proton donor/acceptor) is an active-site residue.

It belongs to the thiolase-like superfamily. HMG-CoA synthase family.

The enzyme catalyses acetoacetyl-CoA + acetyl-CoA + H2O = (3S)-3-hydroxy-3-methylglutaryl-CoA + CoA + H(+). It participates in siderophore biosynthesis. Its function is as follows. Hydroxymethylglutaryl-CoA synthase involved in the biosynthesis of a ferrichrome A-like siderophors which may contribute to organismal virulence. The first step of siderophore biosynthesis is performed by the HMG-CoA synthase (HMGS) MYCGRDRAFT_54740 which catalyzes the generation of HMG-CoA and CoA using acetoacetyl-CoA and acetyl-CoA as substrates. The enoyl-CoA isomerase/hydratase MYCGRDRAFT_76805 then catalyzes the conversion of HMG-CoA to methylglutaconyl-CoA. The acyltransferase MYCGRDRAFT_85486 then fuses methylglutaconyl-CoA with hydroxyornithine to yield methylglutaconyl hydroxyornithine. Methylglutaconyl hydroxyornithine is then available for use by the nonribosomal peptide synthetase NRPS2 to generate the ferrichrome A-like siderophore. The chain is Hydroxymethylglutaryl-CoA synthase MYCGRDRAFT_54740 (ERG13) from Zymoseptoria tritici (strain CBS 115943 / IPO323) (Speckled leaf blotch fungus).